The following is a 491-amino-acid chain: Cytochrome P450 monooxygenase olcB (491 aa).

A helical membrane pass occupies residues 5 to 27; it reads LLLSLSVCLLYVFITAFWNLYIH. Residue cysteine 435 participates in heme binding.

It belongs to the cytochrome P450 family. Heme is required as a cofactor.

It is found in the membrane. It functions in the pathway secondary metabolite biosynthesis; terpenoid biosynthesis. Its function is as follows. Cytochrome P450 monooxygenase; part of the gene cluster that mediates the biosynthesis of 15-deoxyoxalicine B. The first step of the pathway is the synthesis of nicotinyl-CoA from nicotinic acid by the nicotinic acid-CoA ligase olcI. Nicotinyl-CoA is then a substrate of polyketide synthase olcA to produce 4-hydroxy-6-(3-pyridinyl)-2H-pyran-2-one (HPPO) which is further prenylated by the polyprenyl transferase olcH to yield geranylgeranyl-HPPO. Geranylgeranyl pyrophosphate is provided by the cluster-specific geranylgeranyl pyrophosphate synthase olcC. The FAD-dependent monooxygenase olcE catalyzes the epoxidation of geranylgeranyl-HPPO and the terpene cyclase olcD catalyzes the cyclization of the terpenoid component, resulting in the formation of the tricyclic terpene moiety seen in predecaturin E. The cytochrome P450 monooxygenase then catalyzes the allylic oxidation of predecaturin E, which is followed by spirocylization with concomitant loss of one molecule of water to form decaturin E. Decaturin E is the substrate of the cytochrome P450 monooxygenase olcJ which hydroxylates it at the C-29 position to form decaturin F. The short-chain dehydrogenase/reductase olcF may catalyze the oxidation of decaturin F to generate the 29-hydroxyl-27-one intermediate, and subsequent hemiacetal formation probably leads to the formation of decaturin C. The dioxygenase olcK may be a peroxisomal enzyme that catalyzes the hydroxylation of decaturin C into decaturin A once decaturin C is shuttled into the peroxisome by the MFS transporter olcL. Finally the cytochrome P450 monooxygenase olcB catalyzes the oxidative rearrangement to yield 15-deoxyoxalicine B. In the absence of olcJ, decaturin E may be shunted to a pathway in which it is oxidized to a ketone, possibly by olcF, to form decaturin D, which undergoes further allylic oxidation to yield decaturin G. Moreover, in the absence of oclK or oclL, oclB can convert decaturin C into 15-deoxyoxalicine A. The polypeptide is Cytochrome P450 monooxygenase olcB (Penicillium canescens).